Consider the following 67-residue polypeptide: uncharacterized protein (67 aa).

This is an uncharacterized protein from Saccharomyces cerevisiae (strain ATCC 204508 / S288c) (Baker's yeast).